Consider the following 144-residue polypeptide: MKKLELNTEEIMKILPHRYPFLLVDRIIELLPGERAVGIKNLSVNEPFFPGHFPGHPVMPGVLMIEAMAQVGACAILCDEKYQGRLGYLAGVDRIRFKRMAVPGDSLLITTEFTAIKGNIGKGKGQIKINEEMVCGGEFLFALG.

H52 is an active-site residue.

It belongs to the thioester dehydratase family. FabZ subfamily.

Its subcellular location is the cytoplasm. It catalyses the reaction a (3R)-hydroxyacyl-[ACP] = a (2E)-enoyl-[ACP] + H2O. Functionally, involved in unsaturated fatty acids biosynthesis. Catalyzes the dehydration of short chain beta-hydroxyacyl-ACPs and long chain saturated and unsaturated beta-hydroxyacyl-ACPs. The polypeptide is 3-hydroxyacyl-[acyl-carrier-protein] dehydratase FabZ (Syntrophomonas wolfei subsp. wolfei (strain DSM 2245B / Goettingen)).